Consider the following 214-residue polypeptide: MVKSNLQTILNSHCFVREKESNIPKMPVIELTRNKPESESSHRCSNPCPGPLWCSDVPLPPLKIPGGRGNDQRDHSLSAKLFYSDAQLLVLEEAPQSNSRVRFLLFERRCSVSKHLVWRGALKGTNLYIEIPTGVLPEGSKDSFSLLLEFAEEKLQVDHVFICFHKSRDDRASLLRTFSFMGFEIVRPGHPLVPTRPDAFFMAYRIERDSDGDE.

It belongs to the ODC antizyme family. In terms of assembly, interacts with ODC1 and thereby sterically blocks ODC homodimerization.

Functionally, ornithine decarboxylase (ODC) antizyme protein that negatively regulates ODC activity and intracellular polyamine biosynthesis and uptake in response to increased intracellular polyamine levels. Binds to ODC monomers, inhibiting the assembly of the functional ODC homodimer, and targets the monomers for ubiquitin-independent proteolytic destruction by the 26S proteasome. This chain is Ornithine decarboxylase antizyme 1 (oaz1a), found in Danio rerio (Zebrafish).